Consider the following 147-residue polypeptide: Large ribosomal subunit protein uL13 (147 aa).

The protein belongs to the universal ribosomal protein uL13 family. Part of the 50S ribosomal subunit.

Its function is as follows. This protein is one of the early assembly proteins of the 50S ribosomal subunit, although it is not seen to bind rRNA by itself. It is important during the early stages of 50S assembly. The protein is Large ribosomal subunit protein uL13 of Mycobacteroides abscessus (strain ATCC 19977 / DSM 44196 / CCUG 20993 / CIP 104536 / JCM 13569 / NCTC 13031 / TMC 1543 / L948) (Mycobacterium abscessus).